Here is a 1405-residue protein sequence, read N- to C-terminus: DNA-directed RNA polymerase subunit beta' (1405 aa).

4 residues coordinate Zn(2+): cysteine 70, cysteine 72, cysteine 85, and cysteine 88. Positions 460, 462, and 464 each coordinate Mg(2+). Positions 814, 888, 895, and 898 each coordinate Zn(2+).

It belongs to the RNA polymerase beta' chain family. As to quaternary structure, the RNAP catalytic core consists of 2 alpha, 1 beta, 1 beta' and 1 omega subunit. When a sigma factor is associated with the core the holoenzyme is formed, which can initiate transcription. Mg(2+) is required as a cofactor. Requires Zn(2+) as cofactor.

The catalysed reaction is RNA(n) + a ribonucleoside 5'-triphosphate = RNA(n+1) + diphosphate. In terms of biological role, DNA-dependent RNA polymerase catalyzes the transcription of DNA into RNA using the four ribonucleoside triphosphates as substrates. This Shewanella baltica (strain OS223) protein is DNA-directed RNA polymerase subunit beta'.